We begin with the raw amino-acid sequence, 205 residues long: Protein-L-isoaspartate O-methyltransferase (205 aa).

Serine 56 is a catalytic residue.

This sequence belongs to the methyltransferase superfamily. L-isoaspartyl/D-aspartyl protein methyltransferase family.

It is found in the cytoplasm. It catalyses the reaction [protein]-L-isoaspartate + S-adenosyl-L-methionine = [protein]-L-isoaspartate alpha-methyl ester + S-adenosyl-L-homocysteine. Catalyzes the methyl esterification of L-isoaspartyl residues in peptides and proteins that result from spontaneous decomposition of normal L-aspartyl and L-asparaginyl residues. It plays a role in the repair and/or degradation of damaged proteins. The chain is Protein-L-isoaspartate O-methyltransferase from Aeromonas hydrophila subsp. hydrophila (strain ATCC 7966 / DSM 30187 / BCRC 13018 / CCUG 14551 / JCM 1027 / KCTC 2358 / NCIMB 9240 / NCTC 8049).